Consider the following 111-residue polypeptide: Large ribosomal subunit protein uL22 (111 aa).

The protein belongs to the universal ribosomal protein uL22 family. In terms of assembly, part of the 50S ribosomal subunit.

This protein binds specifically to 23S rRNA; its binding is stimulated by other ribosomal proteins, e.g. L4, L17, and L20. It is important during the early stages of 50S assembly. It makes multiple contacts with different domains of the 23S rRNA in the assembled 50S subunit and ribosome. Its function is as follows. The globular domain of the protein is located near the polypeptide exit tunnel on the outside of the subunit, while an extended beta-hairpin is found that lines the wall of the exit tunnel in the center of the 70S ribosome. The protein is Large ribosomal subunit protein uL22 of Francisella philomiragia subsp. philomiragia (strain ATCC 25017 / CCUG 19701 / FSC 153 / O#319-036).